Consider the following 209-residue polypeptide: MFISFEGIDGAGKSTIIKKLKRKLPKLYPDKKFVFTREPGGKKLKEAEKIRKILLDKKTNIDPMTETLLYAASRRVHLDSLIWPALKKGHIVISDRYVDSSYVYQGIARGLGVKVVKEINDIATSNFMPDYTFFLSISEEESIIRRHKRGKPDRLEMSSKDFFSRAYEGYFKIINSPTMADRFILVNAEENVGTILKNILNEFDKILKK.

7-14 (GIDGAGKS) is a binding site for ATP.

This sequence belongs to the thymidylate kinase family.

It carries out the reaction dTMP + ATP = dTDP + ADP. In terms of biological role, phosphorylation of dTMP to form dTDP in both de novo and salvage pathways of dTTP synthesis. This chain is Thymidylate kinase, found in Mycoplasma mobile (strain ATCC 43663 / 163K / NCTC 11711) (Mesomycoplasma mobile).